The following is a 281-amino-acid chain: Large ribosomal subunit protein uL2 (281 aa).

Positions Thr223 to Gly255 are disordered.

This sequence belongs to the universal ribosomal protein uL2 family. As to quaternary structure, part of the 50S ribosomal subunit. Forms a bridge to the 30S subunit in the 70S ribosome.

In terms of biological role, one of the primary rRNA binding proteins. Required for association of the 30S and 50S subunits to form the 70S ribosome, for tRNA binding and peptide bond formation. It has been suggested to have peptidyltransferase activity; this is somewhat controversial. Makes several contacts with the 16S rRNA in the 70S ribosome. This Mycoplasma capricolum subsp. capricolum (strain California kid / ATCC 27343 / NCTC 10154) protein is Large ribosomal subunit protein uL2.